Reading from the N-terminus, the 320-residue chain is Foldase protein PrsA (320 aa).

An N-terminal signal peptide occupies residues 1-20 (MKMINKLIVPVTASALLLGA). Cys-21 carries the N-palmitoyl cysteine lipid modification. Residue Cys-21 is the site of S-diacylglycerol cysteine attachment. A PpiC domain is found at 139 to 245 (EDSKKASHIL…FGYHIIKADK (107 aa)). Residues 159-198 (EGLDDKEAKQKAEEIQKEVSKDPSKFGEIAKKESMDTGSA) are disordered.

The protein belongs to the PrsA family.

It localises to the cell membrane. It catalyses the reaction [protein]-peptidylproline (omega=180) = [protein]-peptidylproline (omega=0). In terms of biological role, plays a major role in protein secretion by helping the post-translocational extracellular folding of several secreted proteins. In Staphylococcus aureus (strain MRSA252), this protein is Foldase protein PrsA.